Consider the following 558-residue polypeptide: Formate--tetrahydrofolate ligase (558 aa).

65-72 contacts ATP; sequence TPAGEGKT.

Belongs to the formate--tetrahydrofolate ligase family.

The enzyme catalyses (6S)-5,6,7,8-tetrahydrofolate + formate + ATP = (6R)-10-formyltetrahydrofolate + ADP + phosphate. Its pathway is one-carbon metabolism; tetrahydrofolate interconversion. The protein is Formate--tetrahydrofolate ligase of Methylobacterium nodulans (strain LMG 21967 / CNCM I-2342 / ORS 2060).